We begin with the raw amino-acid sequence, 153 residues long: Fucose mutarotase (153 aa).

His-24 functions as the Proton donor in the catalytic mechanism. Substrate is bound at residue Asp-32. The active site involves Asp-69. Substrate-binding residues include Met-79, Tyr-120, Tyr-138, and Asn-140. The active site involves Tyr-120.

The protein belongs to the RbsD / FucU family. As to quaternary structure, mainly homodimer, but also exists as homotetramer, homooctamer, and homodecamer. The homodimeric form seems catalytically inactive. Widely expressed in various tissues and cell lines, including kidney, liver, and pancreas, marginally in muscle and testis.

The catalysed reaction is alpha-L-fucose = beta-L-fucose. It participates in carbohydrate metabolism; L-fucose metabolism. In terms of biological role, involved in the interconversion between alpha- and beta-L-fucoses. L-Fucose (6-deoxy-L-galactose) exists as alpha-L-fucose (29.5%) and beta-L-fucose (70.5%), the beta-form is metabolized through the salvage pathway. GDP-L-fucose formed either by the de novo or salvage pathways is transported into the endoplasmic reticulum, where it serves as a substrate for N- and O-glycosylations by fucosyltransferases. Fucosylated structures expressed on cell surfaces or secreted in biological fluids are believed to play a critical role in cell-cell adhesion and recognition processes. This is Fucose mutarotase (Fuom) from Mus musculus (Mouse).